Reading from the N-terminus, the 112-residue chain is Large ribosomal subunit protein bL20c (112 aa).

The protein belongs to the bacterial ribosomal protein bL20 family.

The protein localises to the plastid. It localises to the chloroplast. Its function is as follows. Binds directly to 23S ribosomal RNA and is necessary for the in vitro assembly process of the 50S ribosomal subunit. It is not involved in the protein synthesizing functions of that subunit. This Anthoceros angustus (Hornwort) protein is Large ribosomal subunit protein bL20c (rpl20).